The primary structure comprises 297 residues: Formamidopyrimidine-DNA glycosylase (297 aa).

Catalysis depends on proline 2, which acts as the Schiff-base intermediate with DNA. Glutamate 3 acts as the Proton donor in catalysis. Lysine 58 (proton donor; for beta-elimination activity) is an active-site residue. 3 residues coordinate DNA: histidine 106, arginine 125, and arginine 168. Residues 259 to 295 form an FPG-type zinc finger; the sequence is RVYDREGLACTARGCRGVVRRVVQSGRSTFFCEVCQP. The active-site Proton donor; for delta-elimination activity is arginine 285.

The protein belongs to the FPG family. Monomer. It depends on Zn(2+) as a cofactor.

It catalyses the reaction Hydrolysis of DNA containing ring-opened 7-methylguanine residues, releasing 2,6-diamino-4-hydroxy-5-(N-methyl)formamidopyrimidine.. The catalysed reaction is 2'-deoxyribonucleotide-(2'-deoxyribose 5'-phosphate)-2'-deoxyribonucleotide-DNA = a 3'-end 2'-deoxyribonucleotide-(2,3-dehydro-2,3-deoxyribose 5'-phosphate)-DNA + a 5'-end 5'-phospho-2'-deoxyribonucleoside-DNA + H(+). In terms of biological role, involved in base excision repair of DNA damaged by oxidation or by mutagenic agents. Acts as a DNA glycosylase that recognizes and removes damaged bases. Has a preference for oxidized purines, such as 7,8-dihydro-8-oxoguanine (8-oxoG). Has AP (apurinic/apyrimidinic) lyase activity and introduces nicks in the DNA strand. Cleaves the DNA backbone by beta-delta elimination to generate a single-strand break at the site of the removed base with both 3'- and 5'-phosphates. The chain is Formamidopyrimidine-DNA glycosylase from Methylobacterium nodulans (strain LMG 21967 / CNCM I-2342 / ORS 2060).